The sequence spans 171 residues: T-cell surface glycoprotein CD3 delta chain (171 aa).

Positions 1 to 21 are cleaved as a signal peptide; the sequence is MEHSTFLSGLVLATLLSQVSP. At 22–105 the chain is on the extracellular side; it reads FKIPIEELED…CVELDPATVA (84 aa). A disulfide bridge links cysteine 37 with cysteine 73. N-linked (GlcNAc...) asparagine glycosylation is found at asparagine 38 and asparagine 74. A helical membrane pass occupies residues 106 to 126; it reads GIIVTDVIATLLLALGVFCFA. Residues 127–171 lie on the Cytoplasmic side of the membrane; that stretch reads GHETGRLSGAADTQALLRNDQVYQPLRDRDDAQYSHLGGNWARNK. The 29-residue stretch at 138-166 folds into the ITAM domain; it reads DTQALLRNDQVYQPLRDRDDAQYSHLGGN. Residues tyrosine 149 and tyrosine 160 each carry the phosphotyrosine modification.

The TCR-CD3 complex is composed of a CD3D/CD3E and a CD3G/CD3E heterodimers that preferentially associate with TCRalpha and TCRbeta, respectively, to form TCRalpha/CD3E/CD3G and TCRbeta/CD3G/CD3E trimers. In turn, the hexamer interacts with CD3Z homodimer to form the TCR-CD3 complex. Alternatively, TCRalpha and TCRbeta can be replaced by TCRgamma and TCRdelta. Interacts with coreceptors CD4 and CD8. Post-translationally, phosphorylated on Tyr residues after T-cell receptor triggering by LCK in association with CD4/CD8. CD3D is mostly present on T-lymphocytes with its TCR-CD3 partners. Present also in fetal NK-cells.

The protein localises to the cell membrane. Its function is as follows. Part of the TCR-CD3 complex present on T-lymphocyte cell surface that plays an essential role in adaptive immune response. When antigen presenting cells (APCs) activate T-cell receptor (TCR), TCR-mediated signals are transmitted across the cell membrane by the CD3 chains CD3D, CD3E, CD3G and CD3Z. All CD3 chains contain immunoreceptor tyrosine-based activation motifs (ITAMs) in their cytoplasmic domain. Upon TCR engagement, these motifs become phosphorylated by Src family protein tyrosine kinases LCK and FYN, resulting in the activation of downstream signaling pathways. In addition of this role of signal transduction in T-cell activation, CD3D plays an essential role in thymocyte differentiation. Indeed, participates in correct intracellular TCR-CD3 complex assembly and surface expression. In absence of a functional TCR-CD3 complex, thymocytes are unable to differentiate properly. Interacts with CD4 and CD8 and thus serves to establish a functional link between the TCR and coreceptors CD4 and CD8, which is needed for activation and positive selection of CD4 or CD8 T-cells. The polypeptide is T-cell surface glycoprotein CD3 delta chain (CD3D) (Homo sapiens (Human)).